We begin with the raw amino-acid sequence, 444 residues long: NAD(P)-specific glutamate dehydrogenase (444 aa).

Substrate is bound by residues Lys88, Gln109, and Lys112. The active-site Proton donor is the Lys124. Gly163 is a binding site for substrate. NADP(+) is bound by residues Thr207 and Asn238. Ser376 serves as a coordination point for substrate.

It belongs to the Glu/Leu/Phe/Val dehydrogenases family. As to quaternary structure, homohexamer.

It catalyses the reaction L-glutamate + NAD(+) + H2O = 2-oxoglutarate + NH4(+) + NADH + H(+). It carries out the reaction L-glutamate + NADP(+) + H2O = 2-oxoglutarate + NH4(+) + NADPH + H(+). Catalyzes the reversible oxidative deamination of glutamate to alpha-ketoglutarate and ammonia. P.ruminicola possess both NADP(H)- and NAD(H)-dependent activities on the same enzyme, suggesting that both anabolic and catabolic forms of the enzyme might occur. The sequence is that of NAD(P)-specific glutamate dehydrogenase (gdhA) from Xylanibacter ruminicola (Prevotella ruminicola).